The primary structure comprises 284 residues: RNA polymerase sigma factor RpoH (284 aa).

The interval 54–123 (MVLAHLRFVV…IHEFILRNWR (70 aa)) is sigma-70 factor domain-2. The short motif at 78-81 (DLIQ) is the Interaction with polymerase core subunit RpoC element. Residues 229–280 (ALEGLDERSRDILQQRWLSEEKATLHDLAEKYNVSAERIRQLEKNAMSKLKG) are sigma-70 factor domain-4. The H-T-H motif DNA-binding region spans 253–272 (LHDLAEKYNVSAERIRQLEK).

It belongs to the sigma-70 factor family. RpoH subfamily. Interacts with the RNA polymerase core enzyme.

Its subcellular location is the cytoplasm. Functionally, sigma factors are initiation factors that promote the attachment of RNA polymerase to specific initiation sites and are then released. This sigma factor is involved in regulation of expression of heat shock genes. The sequence is that of RNA polymerase sigma factor RpoH from Pseudomonas aeruginosa (strain ATCC 15692 / DSM 22644 / CIP 104116 / JCM 14847 / LMG 12228 / 1C / PRS 101 / PAO1).